A 317-amino-acid chain; its full sequence is Exopolysaccharide production protein ExoZ (317 aa).

Transmembrane regions (helical) follow at residues 14–34 (TIGAAGVDVFFVISGFIMWVI), 53–73 (IVPVYWLATGVMVAGALAGLF), 100–120 (IWPVLVQGWTLNFEMLFYAVF), 132–152 (LPVVSGLFLALVIAGRVVAFD), 185–205 (LAVGSALFACSLGGFALIGVL), 206–226 (GLPFDELTTGPLAVLLVIGVL), and 268–288 (IGLGAPATMFAAVLSGTLIGI).

The protein belongs to the acyltransferase 3 family.

It is found in the cell membrane. Its function is as follows. Required for the acetyl modification of the third sugar (glucose) of the octasaccharide subunit of succinoglycan (EPS I). The sequence is that of Exopolysaccharide production protein ExoZ (exoZ) from Rhizobium meliloti (strain 1021) (Ensifer meliloti).